The primary structure comprises 567 residues: uncharacterized protein (567 aa).

Over 1–31 (MLDTILINVFRRDGDDDDDDGQDPALQELYS) the chain is Lumenal. The helical transmembrane segment at 32-52 (SWALFILLVLLIGALLTSYYV) threads the bilayer. The Cytoplasmic portion of the chain corresponds to 53–64 (QSKKIRAIHETV). The helical transmembrane segment at 65–85 (ISVFVGMVVGLIIRVSPGLII) threads the bilayer. Residues 86-87 (QN) are Lumenal-facing. Residues 88-108 (MVSFHSTYFFNVLLPPIILNS) form a helical membrane-spanning segment. At 109–128 (GYELHQSNFFRNIGTILTFA) the chain is on the cytoplasmic side. Residues 129–149 (FAGTFISAVTLGVLVYIFSFL) form a helical membrane-spanning segment. At 150–159 (NFENLSMTFV) the chain is on the lumenal side. The helical transmembrane segment at 160–180 (EALSMGATLSATDPVTVLAIF) threads the bilayer. At 181 to 188 (NSYKVDQK) the chain is on the cytoplasmic side. The helical transmembrane segment at 189–209 (LYTIIFGESILNDAVAIVMFE) threads the bilayer. The Lumenal portion of the chain corresponds to 210 to 227 (TLQQFQGKTLHFFTLFSG). Residues 228 to 248 (IGIFIITFFISLLIGVSIGLI) form a helical membrane-spanning segment. Residues 249–277 (TALLLKYSYLRRYPSIESCIILLMAYTSY) lie on the Cytoplasmic side of the membrane. Residues 278-298 (FFSNGCHMSGVVSLLFCGITL) form a helical membrane-spanning segment. Over 299–315 (KHYAFFNMSYKAKLSTK) the chain is Lumenal. Residues 316–338 (YVFRVLAQLSENFIFIYLGMSLF) traverse the membrane as a helical segment. Topologically, residues 339–347 (TQVDLVYKP) are cytoplasmic. A helical membrane pass occupies residues 348 to 366 (IFILITTVAVTASRYMNVF). Residues 367–392 (PLSNLLNKFHRQRNGNLIDHIPYSYQ) are Lumenal-facing. Residues 393–413 (MMLFWAGLRGAVGVALAAGFE) form a helical membrane-spanning segment. Residues 414 to 424 (GENAQTLRATT) lie on the Cytoplasmic side of the membrane. A helical transmembrane segment spans residues 425–445 (LVVVVLTLIIFGGTTARMLEI). Residues 446-567 (LHIETGVAAD…RDNLKNGTKK (122 aa)) lie on the Lumenal side of the membrane. Serine 515 carries the phosphoserine modification.

This sequence belongs to the monovalent cation:proton antiporter 1 (CPA1) transporter (TC 2.A.36) family.

It localises to the golgi apparatus membrane. This is an uncharacterized protein from Schizosaccharomyces pombe (strain 972 / ATCC 24843) (Fission yeast).